Reading from the N-terminus, the 232-residue chain is Peptide deformylase (232 aa).

Fe cation-binding residues include C135 and H178. E179 is a catalytic residue. Fe cation is bound at residue H182.

This sequence belongs to the polypeptide deformylase family. It depends on Fe(2+) as a cofactor.

It carries out the reaction N-terminal N-formyl-L-methionyl-[peptide] + H2O = N-terminal L-methionyl-[peptide] + formate. Removes the formyl group from the N-terminal Met of newly synthesized proteins. Requires at least a dipeptide for an efficient rate of reaction. N-terminal L-methionine is a prerequisite for activity but the enzyme has broad specificity at other positions. This chain is Peptide deformylase, found in Deinococcus radiodurans (strain ATCC 13939 / DSM 20539 / JCM 16871 / CCUG 27074 / LMG 4051 / NBRC 15346 / NCIMB 9279 / VKM B-1422 / R1).